A 64-amino-acid chain; its full sequence is Neurotoxin BmK-II (64 aa).

The LCN-type CS-alpha/beta domain maps to 2–64 (RDAYIAKPHN…VPIRIPGNCH (63 aa)). Cystine bridges form between C12/C63, C16/C36, C22/C46, and C26/C48.

It belongs to the long (4 C-C) scorpion toxin superfamily. Sodium channel inhibitor family. Alpha subfamily. In terms of tissue distribution, expressed by the venom gland.

Its subcellular location is the secreted. Its function is as follows. Binds to sodium channels (Nav) and inhibits the inactivation of the activated channels, thereby blocking neuronal transmission. This toxin is active against mammals and insects. BmK-II is 6-fold less toxic than BmK-I. This chain is Neurotoxin BmK-II, found in Olivierus martensii (Manchurian scorpion).